Consider the following 663-residue polypeptide: Polyunsaturated fatty acid lipoxygenase ALOX15 (663 aa).

One can recognise a PLAT domain in the interval glycine 2–arginine 115. The region spanning threonine 116 to isoleucine 663 is the Lipoxygenase domain. The Fe cation site is built by histidine 361, histidine 366, histidine 541, histidine 545, and isoleucine 663.

The protein belongs to the lipoxygenase family. Interacts with PEBP1; in response to IL13/interleukin-13, prevents the interaction of PEBP1 with RAF1 to activate the ERK signaling cascade. Requires Fe cation as cofactor. As to expression, detected in tracheal epithelium.

The protein localises to the cytoplasm. The protein resides in the cytosol. It is found in the cell membrane. Its subcellular location is the lipid droplet. It catalyses the reaction (5Z,8Z,11Z,14Z)-eicosatetraenoate + O2 = (12S)-hydroperoxy-(5Z,8Z,10E,14Z)-eicosatetraenoate. It carries out the reaction (5Z,8Z,11Z,14Z)-eicosatetraenoate + O2 = (15S)-hydroperoxy-(5Z,8Z,11Z,13E)-eicosatetraenoate. The catalysed reaction is (9Z,12Z)-octadecadienoate + O2 = (13S)-hydroperoxy-(9Z,11E)-octadecadienoate. The enzyme catalyses (5Z,8Z,11Z,14Z)-eicosatetraenoate + 2 O2 = (14R,15S)-dihydroperoxy-(5Z,8Z,10E,12E)-eicosatetraenoate. It catalyses the reaction (5Z,8Z,11Z,14Z)-eicosatetraenoate + 2 O2 = (8S,15S)-dihydroperoxy-(5Z,9E,11Z,13E)-eicosatetraenoate. It carries out the reaction (14S,15R)-epoxy-(5Z,8Z,11Z)-eicosatrienoate + O2 = (8S)-hydroperoxy-(14S,15R)-epoxy-(5Z,9E,11Z)-eicosatrienoate. The catalysed reaction is (14S,15R)-epoxy-(5Z,8Z,11Z)-eicosatrienoate + O2 = (12S)-hydroperoxy-(14S,15R)-epoxy-(5Z,8Z,10E)-eicosatrienoate. The enzyme catalyses (14R,15S)-epoxy-(5Z,8Z,11Z)-eicosatrienoate + O2 = (5S)-hydroperoxy-(14R,15S)-epoxy-(6E,8Z,11Z)-eicosatrienoate. It catalyses the reaction (14R,15S)-epoxy-(5Z,8Z,11Z)-eicosatrienoate + O2 = (12S)-hydroperoxy-(14R,15S)-epoxy-(5Z,8Z,10E)-eicosatrienoate. It carries out the reaction (15R)-hydroperoxy-(5Z,8Z,11Z,13E)-eicosatetraenoate = 15-oxo-(5Z,8Z,11Z,13E)-eicosatetraenoate + H2O. The catalysed reaction is (15S)-hydroperoxy-(5Z,8Z,11Z,13E)-eicosatetraenoate = (14S,15S)-epoxy-(5Z,8Z,10E,12E)-eicosatetraenoate + H2O. The enzyme catalyses (12S)-hydroperoxy-(5Z,8Z,10E,14Z)-eicosatetraenoate = (8S)-hydroxy-(11S,12S)-epoxy-(5Z,9E,14Z)-eicosatrienoate. It catalyses the reaction (4Z,7Z,10Z,13Z,16Z)-docosapentaenoate + O2 = 14-hydroperoxy-(4Z,7Z,10Z,12E,16Z)-docosapentaenoate. It carries out the reaction (7Z,10Z,13Z,16Z,19Z)-docosapentaenoate + O2 = 14-hydroperoxy-(7Z,10Z,12E,16Z,19Z)-docosapentaenoate. The catalysed reaction is (4Z,7Z,10Z,13Z,16Z,19Z)-docosahexaenoate + O2 = (14S)-hydroperoxy-(4Z,7Z,10Z,12E,16Z,19Z)-docosahexaenoate. The enzyme catalyses (4Z,7Z,10Z,13Z,16Z,19Z)-docosahexaenoate + O2 = (17S)-hydroperoxy-(4Z,7Z,10Z,13Z,15E,19Z)-docosahexaenoate. It catalyses the reaction (7S)-hydroperoxy-(4Z,8E,10Z,13Z,16Z,19Z)-docosahexaenoate + O2 = (7S,14S)-dihydroperoxy-(4Z,8E,10Z,12E,16Z,19Z)-docosahexaenoate. It carries out the reaction (7S)-hydroperoxy-(4Z,8E,10Z,13Z,16Z,19Z)-docosahexaenoate + O2 = (7S,17S)-dihydroperoxy-(4Z,8E,10Z,13Z,15E,19Z)-docosahexaenoate. The catalysed reaction is (4Z,7Z,10Z,13Z,16Z,19Z)-docosahexaenoate + O2 = (11S)-hydroperoxy-(4Z,7Z,9E,13Z,16Z,19Z)-docosahexaenoate. The enzyme catalyses N-(5Z,8Z,11Z,14Z)-eicosatetraenoyl-taurine + O2 = N-(12S)-hydroperoxy-(5Z,8Z,10E,14Z)-eicosatetraenoyl-taurine. It catalyses the reaction N-(5Z,8Z,11Z,14Z)-eicosatetraenoyl-gamma-aminobutanoate + O2 = N-(12S)-hydroperoxy-(5Z,8Z,10E,14Z)-eicosatetraenoyl-gamma-aminobutanoate. It carries out the reaction N-(5Z,8Z,11Z,14Z)-eicosatetraenoyl-glycine + O2 = N-(12S)-hydroperoxy-(5Z,8Z,10E,14Z)-eicosatetraenoyl-glycine. The catalysed reaction is N-(5Z,8Z,11Z,14Z)-eicosatetraenoyl-L-alanine + O2 = N-(12S)-hydroperoxy-(5Z,8Z,10E,14Z)-eicosatetraenoyl-alanine. The enzyme catalyses N-(5Z,8Z,11Z,14Z)-eicosatetraenoyl-taurine + O2 = N-(15S)-hydroperoxy-(5Z,8Z,11Z,13E)-eicosatetraenoyl-taurine. It catalyses the reaction N-(5Z,8Z,11Z,14Z)-eicosatetraenoyl-gamma-aminobutanoate + O2 = N-(15S)-hydroperoxy-(5Z,8Z,11Z,13E)-eicosatetraenoyl-gamma-aminobutanoate. It carries out the reaction N-(5Z,8Z,11Z,14Z)-eicosatetraenoyl-glycine + O2 = N-(15S)-hydroperoxy-(5Z,8Z,11Z,13E)-eicosatetraenoyl-glycine. The catalysed reaction is N-(5Z,8Z,11Z,14Z)-eicosatetraenoyl-L-alanine + O2 = N-(15S)-hydroperoxy-(5Z,8Z,11Z,13E)-eicosatetraenoyl-alanine. It functions in the pathway lipid metabolism; hydroperoxy eicosatetraenoic acid biosynthesis. Functionally, non-heme iron-containing dioxygenase that catalyzes the stereo-specific peroxidation of free and esterified polyunsaturated fatty acids generating a spectrum of bioactive lipid mediators. It inserts peroxyl groups at C12 or C15 of arachidonate ((5Z,8Z,11Z,14Z)-eicosatetraenoate) producing both 12-hydroperoxyeicosatetraenoate/12-HPETE and 15-hydroperoxyeicosatetraenoate/15-HPETE. It may then act on 12-HPETE to produce hepoxilins, which may show pro-inflammatory properties. Can also peroxidize linoleate ((9Z,12Z)-octadecadienoate) to 13-hydroperoxyoctadecadienoate. May participate in the sequential oxidations of DHA ((4Z,7Z,10Z,13Z,16Z,19Z)-docosahexaenoate) to generate specialized pro-resolving mediators (SPMs)like resolvin D5 ((7S,17S)-diHPDHA) and (7S,14S)-diHPDHA, that actively down-regulate the immune response and have anti-aggregation properties with platelets. Can convert epoxy fatty acids to hydroperoxy-epoxides derivatives followed by an intramolecular nucleophilic substitution leading to the formation of monocyclic endoperoxides. Plays an important role during the maintenance of self-tolerance by peroxidizing membrane-bound phosphatidylethanolamine which can then signal the sorting process for clearance of apoptotic cells during inflammation and prevent an autoimmune response. In addition to its role in the immune and inflammatory responses, this enzyme may play a role in epithelial wound healing in the cornea through production of lipoxin A4 (LXA(4)) and docosahexaenoic acid-derived neuroprotectin D1 (NPD1; 10R,17S-HDHA), both lipid autacoids exhibit anti-inflammatory and neuroprotective properties. Furthermore, it may regulate actin polymerization which is crucial for several biological processes such as the phagocytosis of apoptotic cells. It is also implicated in the generation of endogenous ligands for peroxisome proliferator activated receptor (PPAR-gamma), hence modulating macrophage development and function. It may also exert a negative effect on skeletal development by regulating bone mass through this pathway. As well as participates in ER stress and downstream inflammation in adipocytes, pancreatic islets, and liver. Finally, it is also involved in the cellular response to IL13/interleukin-13. The polypeptide is Polyunsaturated fatty acid lipoxygenase ALOX15 (Bos taurus (Bovine)).